Consider the following 238-residue polypeptide: DNA repair protein RecO (238 aa).

It belongs to the RecO family.

Functionally, involved in DNA repair and RecF pathway recombination. This Cereibacter sphaeroides (strain ATCC 17023 / DSM 158 / JCM 6121 / CCUG 31486 / LMG 2827 / NBRC 12203 / NCIMB 8253 / ATH 2.4.1.) (Rhodobacter sphaeroides) protein is DNA repair protein RecO.